A 372-amino-acid chain; its full sequence is Queuine tRNA-ribosyltransferase (372 aa).

Asp89 (proton acceptor) is an active-site residue. Residues 89-93 (DSGGF), Asp143, Gln185, and Gly212 each bind substrate. The tract at residues 243–249 (GVGKPED) is RNA binding. Asp262 functions as the Nucleophile in the catalytic mechanism. The tract at residues 267 to 271 (TRNAR) is RNA binding; important for wobble base 34 recognition. Zn(2+)-binding residues include Cys300, Cys302, Cys305, and His331.

The protein belongs to the queuine tRNA-ribosyltransferase family. Homodimer. Within each dimer, one monomer is responsible for RNA recognition and catalysis, while the other monomer binds to the replacement base PreQ1. Requires Zn(2+) as cofactor.

It catalyses the reaction 7-aminomethyl-7-carbaguanine + guanosine(34) in tRNA = 7-aminomethyl-7-carbaguanosine(34) in tRNA + guanine. It participates in tRNA modification; tRNA-queuosine biosynthesis. Functionally, catalyzes the base-exchange of a guanine (G) residue with the queuine precursor 7-aminomethyl-7-deazaguanine (PreQ1) at position 34 (anticodon wobble position) in tRNAs with GU(N) anticodons (tRNA-Asp, -Asn, -His and -Tyr). Catalysis occurs through a double-displacement mechanism. The nucleophile active site attacks the C1' of nucleotide 34 to detach the guanine base from the RNA, forming a covalent enzyme-RNA intermediate. The proton acceptor active site deprotonates the incoming PreQ1, allowing a nucleophilic attack on the C1' of the ribose to form the product. After dissociation, two additional enzymatic reactions on the tRNA convert PreQ1 to queuine (Q), resulting in the hypermodified nucleoside queuosine (7-(((4,5-cis-dihydroxy-2-cyclopenten-1-yl)amino)methyl)-7-deazaguanosine). This is Queuine tRNA-ribosyltransferase from Pseudomonas aeruginosa (strain LESB58).